Consider the following 184-residue polypeptide: Protein DP71L (184 aa).

Basic residues predominate over residues 1–15 (MSRRNKRSRRRRKKP). Residues 1–41 (MSRRNKRSRRRRKKPLNTIQPGPSKPSAQDEPIKSVSHHSS) form a disordered region. 2 important for host CHOP inhibition regions span residues 125–127 (VYF) and 169–173 (LSAVL).

Belongs to the asfivirus DP71L family. Interacts (via C-terminus) with host PPP1CB.

In terms of biological role, interacts with the host phosphatase PP1 catalytic subunit (PPP1CB) and recruits it to dephosphorylate EIF2S1/eIF2alpha and therefore restores the host translation that has been shut-down by the host. Also inhibits the EIF2S1/eIF2alpha-ATF4-DDIT3/CHOP pathway. The sequence is that of Protein DP71L from Ornithodoros (relapsing fever ticks).